A 177-amino-acid chain; its full sequence is Inorganic pyrophosphatase (177 aa).

The substrate site is built by Lys-30, Arg-44, and Tyr-56. Mg(2+) is bound by residues Asp-66, Asp-71, and Asp-103. Tyr-142 serves as a coordination point for substrate.

The protein belongs to the PPase family. In terms of assembly, homohexamer. Requires Mg(2+) as cofactor.

It is found in the cytoplasm. The enzyme catalyses diphosphate + H2O = 2 phosphate + H(+). Catalyzes the hydrolysis of inorganic pyrophosphate (PPi) forming two phosphate ions. The protein is Inorganic pyrophosphatase of Caulobacter vibrioides (strain ATCC 19089 / CIP 103742 / CB 15) (Caulobacter crescentus).